Reading from the N-terminus, the 70-residue chain is Aurein-3.1 (70 aa).

The signal sequence occupies residues 1–22; it reads MAFLKKSLFLVLFLGLVSLSIC. The propeptide occupies 23 to 49; it reads EKEKRQNEEDEDENEAANHEEGSEEKR. The disordered stretch occupies residues 27 to 48; the sequence is RQNEEDEDENEAANHEEGSEEK. Residues 38 to 48 show a composition bias toward basic and acidic residues; the sequence is AANHEEGSEEK. Isoleucine 66 is subject to Isoleucine amide.

Expressed by the skin dorsal glands.

Its subcellular location is the secreted. The protein localises to the target cell membrane. In terms of biological role, amphipathic alpha-helical antimicrobial peptide with weak to potent activity against Gram-positive bacteria, and no activity against Gram-negative bacteria. Probably acts by disturbing membrane functions with its amphipathic structure. Shows anticancer activity. This chain is Aurein-3.1, found in Ranoidea aurea (Green and golden bell frog).